The chain runs to 420 residues: Histidine--tRNA ligase (420 aa).

It belongs to the class-II aminoacyl-tRNA synthetase family. Homodimer.

The protein resides in the cytoplasm. The enzyme catalyses tRNA(His) + L-histidine + ATP = L-histidyl-tRNA(His) + AMP + diphosphate + H(+). This chain is Histidine--tRNA ligase, found in Desulforudis audaxviator (strain MP104C).